A 539-amino-acid polypeptide reads, in one-letter code: Histone-arginine methyltransferase CARMER (539 aa).

An SAM-dependent MTase PRMT-type domain is found at 149–458 (ASQYFQFYGY…QSYDVTIDLH (310 aa)). Residues Gln-162, Arg-171, Gly-195, Glu-217, Glu-246, and Thr-274 each contribute to the S-adenosyl-L-methionine site. Position 509 is an asymmetric dimethylarginine; by autocatalysis (Arg-509).

The protein belongs to the class I-like SAM-binding methyltransferase superfamily. Protein arginine N-methyltransferase family. In terms of assembly, homodimer. In terms of processing, the dimethylated protein is the major form.

It localises to the cytoplasm. It is found in the nucleus. It catalyses the reaction L-arginyl-[protein] + 2 S-adenosyl-L-methionine = N(omega),N(omega)-dimethyl-L-arginyl-[protein] + 2 S-adenosyl-L-homocysteine + 2 H(+). Its function is as follows. Methylates (mono- and asymmetric dimethylation) the guanidino nitrogens of arginyl residues in proteins. May methylate histone H3 at 'Arg-17' and activate transcription via chromatin remodeling. This chain is Histone-arginine methyltransferase CARMER (Art4), found in Drosophila mojavensis (Fruit fly).